The sequence spans 313 residues: Probable pyridoxal 5'-phosphate synthase subunit PDX1.2 (313 aa).

D42 contributes to the D-ribose 5-phosphate binding site. K99 acts as the Schiff-base intermediate with D-ribose 5-phosphate in catalysis. G171 provides a ligand contact to D-ribose 5-phosphate. R183 contacts D-glyceraldehyde 3-phosphate. D-ribose 5-phosphate contacts are provided by residues G232 and 253 to 254; that span reads GS.

The protein belongs to the PdxS/SNZ family.

The catalysed reaction is aldehydo-D-ribose 5-phosphate + D-glyceraldehyde 3-phosphate + L-glutamine = pyridoxal 5'-phosphate + L-glutamate + phosphate + 3 H2O + H(+). It functions in the pathway cofactor biosynthesis; pyridoxal 5'-phosphate biosynthesis. Its function is as follows. Catalyzes the formation of pyridoxal 5'-phosphate from ribose 5-phosphate (RBP), glyceraldehyde 3-phosphate (G3P) and ammonia. The ammonia is provided by PDX2. Can also use ribulose 5-phosphate and dihydroxyacetone phosphate as substrates, resulting from enzyme-catalyzed isomerization of RBP and G3P, respectively. Also plays an indirect role in resistance to singlet oxygen-generating photosensitizers. This is Probable pyridoxal 5'-phosphate synthase subunit PDX1.2 (PDX12) from Oryza sativa subsp. japonica (Rice).